A 429-amino-acid polypeptide reads, in one-letter code: 3-isopropylmalate dehydratase large subunit (429 aa).

The [4Fe-4S] cluster site is built by Cys-303, Cys-363, and Cys-366.

The protein belongs to the aconitase/IPM isomerase family. LeuC type 2 subfamily. In terms of assembly, heterodimer of LeuC and LeuD. It depends on [4Fe-4S] cluster as a cofactor.

It carries out the reaction (2R,3S)-3-isopropylmalate = (2S)-2-isopropylmalate. The protein operates within amino-acid biosynthesis; L-leucine biosynthesis; L-leucine from 3-methyl-2-oxobutanoate: step 2/4. Catalyzes the isomerization between 2-isopropylmalate and 3-isopropylmalate, via the formation of 2-isopropylmaleate. This is 3-isopropylmalate dehydratase large subunit from Caldicellulosiruptor bescii (strain ATCC BAA-1888 / DSM 6725 / KCTC 15123 / Z-1320) (Anaerocellum thermophilum).